The chain runs to 150 residues: Large ribosomal subunit protein uL13 (150 aa).

The protein belongs to the universal ribosomal protein uL13 family. In terms of assembly, part of the 50S ribosomal subunit.

This protein is one of the early assembly proteins of the 50S ribosomal subunit, although it is not seen to bind rRNA by itself. It is important during the early stages of 50S assembly. The polypeptide is Large ribosomal subunit protein uL13 (Chlorobaculum parvum (strain DSM 263 / NCIMB 8327) (Chlorobium vibrioforme subsp. thiosulfatophilum)).